Consider the following 917-residue polypeptide: Hexokinase-2 (917 aa).

N-acetylmethionine is present on Met1. Residues Met1–His16 are mitochondrial-binding peptide (MBP). Hexokinase domains are found at residues His16 to Ala458 and Ala464 to Ala906. ATP-binding positions include Arg30 and Asp84 to Asn89. A hexokinase small subdomain 1 region spans residues Asp73 to Val207. D-glucose 6-phosphate is bound at residue Asp84 to Thr88. Residues Ser155–Phe156, Thr172–Lys173, and Asn208–Asp209 contribute to the D-glucose site. The hexokinase large subdomain 1 stretch occupies residues Asn208 to Asp447. D-glucose 6-phosphate is bound by residues Asp209 and Thr232. Residues Asn235, Glu260, and Gln291–Glu294 each bind D-glucose. Asp413–Ser415 is a D-glucose 6-phosphate binding site. Lys425–Arg426 lines the ATP pocket. D-glucose 6-phosphate-binding positions include Ser449 and Asp532 to Thr536. Positions Asp521–Val655 are hexokinase small subdomain 2. Asp532 to Asn537 serves as a coordination point for ATP. Residues Ser603–Phe604, Thr620–Lys621, and Asn656–Asp657 contribute to the D-glucose site. The hexokinase large subdomain 2 stretch occupies residues Asn656–Asp895. 2 residues coordinate D-glucose 6-phosphate: Asp657 and Thr680. Thr680 is an ATP binding site. D-glucose contacts are provided by residues Ser682–Asn683, Glu708, and Gln739–Glu742. ATP-binding positions include Gly747–Met748, Thr784–Ser788, and Thr863–Leu867. D-glucose 6-phosphate-binding positions include Asp861–Thr863 and Ser897.

Belongs to the hexokinase family. As to quaternary structure, monomer. Interacts with TIGAR; the interaction increases hexokinase activity in a hypoxia- and HIF1A-dependent manner. In terms of tissue distribution, predominant hexokinase isozyme expressed in insulin-responsive tissues such as skeletal muscle.

It localises to the mitochondrion outer membrane. The protein resides in the cytoplasm. Its subcellular location is the cytosol. The enzyme catalyses a D-hexose + ATP = a D-hexose 6-phosphate + ADP + H(+). It catalyses the reaction D-fructose + ATP = D-fructose 6-phosphate + ADP + H(+). It carries out the reaction D-glucose + ATP = D-glucose 6-phosphate + ADP + H(+). The protein operates within carbohydrate metabolism; hexose metabolism. It participates in carbohydrate degradation; glycolysis; D-glyceraldehyde 3-phosphate and glycerone phosphate from D-glucose: step 1/4. Its activity is regulated as follows. Hexokinase activity is specifically inhibited by 2,6-disubstituted glucosamines. Its function is as follows. Catalyzes the phosphorylation of hexose, such as D-glucose and D-fructose, to hexose 6-phosphate (D-glucose 6-phosphate and D-fructose 6-phosphate, respectively). Mediates the initial step of glycolysis by catalyzing phosphorylation of D-glucose to D-glucose 6-phosphate. Plays a key role in maintaining the integrity of the outer mitochondrial membrane by preventing the release of apoptogenic molecules from the intermembrane space and subsequent apoptosis. The sequence is that of Hexokinase-2 from Homo sapiens (Human).